The sequence spans 229 residues: uncharacterized protein (229 aa).

This is an uncharacterized protein from Methanocaldococcus jannaschii (strain ATCC 43067 / DSM 2661 / JAL-1 / JCM 10045 / NBRC 100440) (Methanococcus jannaschii).